Here is a 266-residue protein sequence, read N- to C-terminus: Aspartate/glutamate leucyltransferase (266 aa).

Belongs to the R-transferase family. Bpt subfamily.

It localises to the cytoplasm. The enzyme catalyses N-terminal L-glutamyl-[protein] + L-leucyl-tRNA(Leu) = N-terminal L-leucyl-L-glutamyl-[protein] + tRNA(Leu) + H(+). It carries out the reaction N-terminal L-aspartyl-[protein] + L-leucyl-tRNA(Leu) = N-terminal L-leucyl-L-aspartyl-[protein] + tRNA(Leu) + H(+). In terms of biological role, functions in the N-end rule pathway of protein degradation where it conjugates Leu from its aminoacyl-tRNA to the N-termini of proteins containing an N-terminal aspartate or glutamate. This chain is Aspartate/glutamate leucyltransferase, found in Rhizorhabdus wittichii (strain DSM 6014 / CCUG 31198 / JCM 15750 / NBRC 105917 / EY 4224 / RW1) (Sphingomonas wittichii).